A 487-amino-acid polypeptide reads, in one-letter code: METVQLRNPPRRQLKKLDEDSLTKQPEEVFDVLEKLGEGSYGSVYKAIHKETGQIVAIKQVPVESDLQEIIKEISIMQQCDSHHVVKYYGSYFKNTDLWIVMEYCGAGSVSDIIRLRNKTLTEDEIATILQSTLKGLEYLHFMRKIHRDIKAGNILLNTEGHAKLADFGVAGQLTDTMAKRNTVIGTPFWMAPEVIQEIGYNCVADIWSLGITAIEMAEGKPPYADIHPMRAIFMIPTNPPPTFRKPELWSDNFTDFVKQCLVKSPEQRATATQLLQHPFVKSAKGVSILRDLINEAMDVKLKRQESQQREVDQDDEENSEEDEMDSGTMVRAVGDEMGTVRVASTMTDGANTMIEHDDTLPSQLGTMVINAEDEEEEGTMKRRDETMQPAKPSFLEYFEQKEKENQINSFGKSIPGPLQNSSDWKVPQDGDYEFLKSWTVEDLQKRLLALDPMMEQEIEEIRQKYQSKRQPILDAIEAKKRRQQNF.

Position 1 is an N-acetylmethionine (Met1). The residue at position 3 (Thr3) is a Phosphothreonine. Positions 30 to 281 (FDVLEKLGEG…ATQLLQHPFV (252 aa)) constitute a Protein kinase domain. ATP is bound by residues 36 to 44 (LGEGSYGSV) and Lys59. Residue Asp149 is the Proton acceptor of the active site. Thr183 carries the phosphothreonine; by autocatalysis modification. The residue at position 265 (Ser265) is a Phosphoserine. Residues 290–310 (LRDLINEAMDVKLKRQESQQR) adopt a coiled-coil conformation. Residues 303–312 (KRQESQQREV) show a composition bias toward basic and acidic residues. A disordered region spans residues 303-332 (KRQESQQREVDQDDEENSEEDEMDSGTMVR). Over residues 313–326 (DQDDEENSEEDEMD) the composition is skewed to acidic residues. Ser320 is modified (phosphoserine). Phosphothreonine is present on residues Thr340 and Thr367. Thr387 carries the phosphothreonine; by PKB/AKT1 modification. 2 positions are modified to phosphoserine: Ser410 and Ser414. Tyr433 bears the Phosphotyrosine mark. The SARAH domain maps to 433–480 (YEFLKSWTVEDLQKRLLALDPMMEQEIEEIRQKYQSKRQPILDAIEAK).

This sequence belongs to the protein kinase superfamily. STE Ser/Thr protein kinase family. STE20 subfamily. Homodimer; mediated via the coiled-coil region. Interacts with NORE1, which inhibits autoactivation. Interacts with and stabilizes SAV1. Interacts with RASSF1. Interacts with FOXO3. Interacts with RASSF2 (via SARAH domain). Interacts with AR, PKB/AKT1, TNNI3 and SIRT1. Interacts with DLG5 (via PDZ domain 3). Interacts with MARK3 and SCRIB in the presence of DLG5. Requires Mg(2+) as cofactor. Post-translationally, autophosphorylated on serine and threonine residues. Phosphorylation at Thr-387 by PKB/AKT1, leads to inhibition of its: kinase activity, nuclear translocation and autophosphorylation at Thr-183. It also diminishes its cleavage by caspases and its ability to phosphorylate FOXO3. Proteolytically cleaved by caspase-3 during apoptosis at Asp-326 and Asp-349 resulting in a 37 kDa or a 39 kDa subunit respectively. The 39 kDa subunit is further cleaved into the 37 kDa form. Proteolytic cleavage results in kinase activation and nuclear translocation of the truncated form (MST1/N). It is less likely that cleavage at Asp-349 is a prerequisite for activation as this site is not conserved in the murine ortholog.

It localises to the cytoplasm. The protein localises to the nucleus. It catalyses the reaction L-seryl-[protein] + ATP = O-phospho-L-seryl-[protein] + ADP + H(+). The enzyme catalyses L-threonyl-[protein] + ATP = O-phospho-L-threonyl-[protein] + ADP + H(+). Its activity is regulated as follows. Inhibited by the C-terminal non-catalytic region. Activated by caspase-cleavage. Full activation also requires homodimerization and autophosphorylation of Thr-183. Activated by RASSF1 which acts by preventing its dephosphorylation. In terms of biological role, stress-activated, pro-apoptotic kinase which, following caspase-cleavage, enters the nucleus and induces chromatin condensation followed by internucleosomal DNA fragmentation. Key component of the Hippo signaling pathway which plays a pivotal role in organ size control and tumor suppression by restricting proliferation and promoting apoptosis. The core of this pathway is composed of a kinase cascade wherein STK3/MST2 and STK4/MST1, in complex with its regulatory protein SAV1, phosphorylates and activates LATS1/2 in complex with its regulatory protein MOB1, which in turn phosphorylates and inactivates YAP1 oncoprotein and WWTR1/TAZ. Phosphorylation of YAP1 by LATS2 inhibits its translocation into the nucleus to regulate cellular genes important for cell proliferation, cell death, and cell migration. STK3/MST2 and STK4/MST1 are required to repress proliferation of mature hepatocytes, to prevent activation of facultative adult liver stem cells (oval cells), and to inhibit tumor formation. Phosphorylates 'Ser-14' of histone H2B (H2BS14ph) during apoptosis. Phosphorylates FOXO3 upon oxidative stress, which results in its nuclear translocation and cell death initiation. Phosphorylates MOBKL1A, MOBKL1B and RASSF2. Phosphorylates TNNI3 (cardiac Tn-I) and alters its binding affinity to TNNC1 (cardiac Tn-C) and TNNT2 (cardiac Tn-T). Phosphorylates FOXO1 on 'Ser-212' and regulates its activation and stimulates transcription of PMAIP1 in a FOXO1-dependent manner. Phosphorylates SIRT1 and inhibits SIRT1-mediated p53/TP53 deacetylation, thereby promoting p53/TP53 dependent transcription and apoptosis upon DNA damage. Acts as an inhibitor of PKB/AKT1. Phosphorylates AR on 'Ser-650' and suppresses its activity by intersecting with PKB/AKT1 signaling and antagonizing formation of AR-chromatin complexes. This is Serine/threonine-protein kinase 4 (STK4) from Aotus nancymaae (Ma's night monkey).